A 757-amino-acid polypeptide reads, in one-letter code: Transcription regulator rua1 (757 aa).

5 disordered regions span residues 122–169 (SSGS…LPVS), 181–218 (NHQV…SNQD), 237–295 (RNTG…NGYT), 372–393 (SADC…PYPL), and 422–582 (MELQ…IGNA). Low complexity predominate over residues 125-165 (SATKSEPSTCSSSTDFSMSSTADASTAPQHSSSGDSSMSSG). 2 stretches are compositionally biased toward polar residues: residues 181–190 (NHQVTTQDAS) and 200–218 (QPPS…SNQD). Over residues 240–249 (GHRQHNRHQK) the composition is skewed to basic residues. Residues 253-277 (LPQGQSCTNSGSSSRQVTRPNSPNH) show a composition bias toward polar residues. Residues 379–393 (PRPPSNSPEPHPYPL) show a composition bias toward pro residues. Over residues 428–437 (PARSNSTFGR) the composition is skewed to polar residues. The span at 439 to 453 (SQRHHQPPPSHRQRS) shows a compositional bias: basic residues. Low complexity-rich tracts occupy residues 454–465 (RTSASSISNTNA), 494–510 (ASQS…ATDA), and 543–582 (TSSS…IGNA). The C2H2-type 1 degenerate zinc-finger motif lies at 661 to 692 (REGWCSLCPQGEWYSMKRSQYLYHMQFDHGIS). Residues 717–750 (GLCHHCNKWIPICFGPQRKRDFKAWFKHARKCHR) form a C2H2-type 2; degenerate zinc finger.

The protein resides in the nucleus. Functionally, transcription factor; part of the gene cluster that mediates the biosynthesis of the glycolipid biosurfactant ustilagic acid (UA). UA is a secreted cellobiose glycolipid that is toxic for many microorganisms and confers biocontrol activity to U.maydis. Recognizes and binds to the specific 5'-T/G-G/T-C-G-C-A-T-A/T-C/T-C/T-G/A-3' upstream activating sequence found in all promoters of the UA biosynthesis genes. The protein is Transcription regulator rua1 of Mycosarcoma maydis (Corn smut fungus).